Consider the following 275-residue polypeptide: NH(3)-dependent NAD(+) synthetase (275 aa).

50–57 (GISGGVDS) provides a ligand contact to ATP. Aspartate 56 contacts Mg(2+). Arginine 147 is a binding site for deamido-NAD(+). Threonine 167 is a binding site for ATP. Glutamate 172 contributes to the Mg(2+) binding site. Deamido-NAD(+)-binding residues include lysine 180 and aspartate 187. Positions 196 and 218 each coordinate ATP. Deamido-NAD(+) is bound at residue 267–268 (HK).

It belongs to the NAD synthetase family. As to quaternary structure, homodimer.

The catalysed reaction is deamido-NAD(+) + NH4(+) + ATP = AMP + diphosphate + NAD(+) + H(+). The protein operates within cofactor biosynthesis; NAD(+) biosynthesis; NAD(+) from deamido-NAD(+) (ammonia route): step 1/1. Its function is as follows. Catalyzes the ATP-dependent amidation of deamido-NAD to form NAD. Uses ammonia as a nitrogen source. The sequence is that of NH(3)-dependent NAD(+) synthetase from Stutzerimonas stutzeri (strain A1501) (Pseudomonas stutzeri).